The sequence spans 509 residues: Autophagy-related protein 16 (509 aa).

7 WD repeats span residues 223–262 (AHEG…LIKS), 265–304 (GSLG…VRHT), 307–347 (GHTD…CTNT), 349–388 (LFTS…LLSE), 391–430 (GHSS…ICGT), 437–478 (RLAS…SILK), and 480–509 (QTSP…CTWT).

Belongs to the WD repeat ATG16 family.

May play a role in autophagy. The sequence is that of Autophagy-related protein 16 from Arabidopsis thaliana (Mouse-ear cress).